A 252-amino-acid polypeptide reads, in one-letter code: Mitochondrial intermembrane space import and assembly protein 40 (252 aa).

Residues 1-31 (MYRTISRSSSGLIRQSTARLTRQLSTTRTTP) constitute a mitochondrion transit peptide. The Mitochondrial matrix portion of the chain corresponds to 32–37 (SQYNSK). Residues 38-54 (LLLGVLGTGALAFGYFS) traverse the membrane as a helical; Signal-anchor for type II membrane protein segment. Over 55 to 252 (QQSSLIQNAS…DKVKPNTKSD (198 aa)) the chain is Mitochondrial intermembrane. The span at 90–123 (RQEKVIKENEQKTKKAEDAKTSSESKANVADKKS) shows a compositional bias: basic and acidic residues. Residues 90–143 (RQEKVIKENEQKTKKAEDAKTSSESKANVADKKSNSQPEGEPEGEGKQEAAFNP) form a disordered region. 3 disulfide bridges follow: Cys-152–Cys-154, Cys-163–Cys-196, and Cys-173–Cys-186. Positions 160-204 (HGPCGEEFKEAFSCFVFSETEPKGIDCIKKFENMRSCFKRYPEHY) constitute a CHCH domain. 2 short sequence motifs (cx9C motif) span residues 163-173 (CGEEFKEAFSC) and 186-196 (CIKKFENMRSC). Residues 230–252 (EPAIEQIEQGIKEDKVKPNTKSD) are disordered. The segment covering 239–252 (GIKEDKVKPNTKSD) has biased composition (basic and acidic residues).

As to quaternary structure, monomer. Requires Cu(2+) as cofactor. Zn(2+) is required as a cofactor.

It is found in the mitochondrion inner membrane. Its function is as follows. Required for the import and folding of small cysteine-containing proteins (small Tim) in the mitochondrial intermembrane space (IMS). Forms a redox cycle with ERV1 that involves a disulfide relay system. Precursor proteins to be imported into the IMS are translocated in their reduced form into the mitochondria. The oxidized form of MIA40 forms a transient intermolecular disulfide bridge with the reduced precursor protein, resulting in oxidation of the precursor protein that now contains an intramolecular disulfide bond and is able to undergo folding in the IMS. The chain is Mitochondrial intermembrane space import and assembly protein 40 (MIA40) from Candida albicans (strain SC5314 / ATCC MYA-2876) (Yeast).